Reading from the N-terminus, the 347-residue chain is Bifunctional dihydroflavonol 4-reductase/flavanone 4-reductase (347 aa).

NADP(+) contacts are provided by Lys44 and Tyr163.

The protein belongs to the NAD(P)-dependent epimerase/dehydratase family. Dihydroflavonol-4-reductase subfamily.

It catalyses the reaction a (2R,3S,4S)-leucoanthocyanidin + NADP(+) = a (2R,3R)-dihydroflavonol + NADPH + H(+). The enzyme catalyses (2S)-flavan-4-ol + NADP(+) = (2S)-flavanone + NADPH + H(+). Its function is as follows. Bifunctional enzyme involved in the flavonoid metabolism. May use dihydroquercetin, eriodictyol, garbanzol (5-deoxydihydrokaempferol), dihydrofisetin (5-deoxydihydroquercetin), dihydrokaempferol to a low extent (5%), but not naringenin, 5-deoxynaringenin or butin (5-deoxyeriodictyol) as substrate. In Pyrus communis (Pear), this protein is Bifunctional dihydroflavonol 4-reductase/flavanone 4-reductase (DFR).